Here is a 589-residue protein sequence, read N- to C-terminus: Protein NRT1/ PTR FAMILY 7.2 (589 aa).

2 consecutive transmembrane segments (helical) span residues 32–52 (WLTA…FFGV) and 78–98 (WTGT…SYWG). Threonine 102 bears the Phosphothreonine mark. A run of 10 helical transmembrane segments spans residues 105 to 125 (IFQA…GALL), 147 to 167 (VLFY…QPNI), 187 to 207 (IAFF…SNTV), 217 to 237 (WPLG…LFLI), 343 to 363 (IWLC…LFVV), 377 to 397 (IPAS…IFAY), 423 to 443 (MGIG…VEIH), 464 to 484 (IFWQ…MYVG), 504 to 524 (LCMA…SIVM), and 548 to 568 (FYFL…ICAK).

This sequence belongs to the major facilitator superfamily. Proton-dependent oligopeptide transporter (POT/PTR) (TC 2.A.17) family. In terms of tissue distribution, expressed in xylem parenchyma cells within the vasculature. Expressed in siliques and flowers. Higher expression in shoots than in roots.

Its subcellular location is the cell membrane. Its function is as follows. Low-affinity nitrate transporter. Involved in nitrate removal from xylem sap. Not involved in oligopeptides transport. This chain is Protein NRT1/ PTR FAMILY 7.2 (NPF7.2), found in Arabidopsis thaliana (Mouse-ear cress).